The sequence spans 210 residues: Ribosomal RNA large subunit methyltransferase E (210 aa).

5 residues coordinate S-adenosyl-L-methionine: glycine 60, tryptophan 62, aspartate 85, aspartate 101, and aspartate 126. Lysine 166 functions as the Proton acceptor in the catalytic mechanism. A compositionally biased stretch (basic and acidic residues) spans lysine 191 to serine 200. A disordered region spans residues lysine 191–lysine 210.

Belongs to the class I-like SAM-binding methyltransferase superfamily. RNA methyltransferase RlmE family.

It localises to the cytoplasm. It carries out the reaction uridine(2552) in 23S rRNA + S-adenosyl-L-methionine = 2'-O-methyluridine(2552) in 23S rRNA + S-adenosyl-L-homocysteine + H(+). Specifically methylates the uridine in position 2552 of 23S rRNA at the 2'-O position of the ribose in the fully assembled 50S ribosomal subunit. The chain is Ribosomal RNA large subunit methyltransferase E from Bordetella bronchiseptica (strain ATCC BAA-588 / NCTC 13252 / RB50) (Alcaligenes bronchisepticus).